We begin with the raw amino-acid sequence, 302 residues long: Oxygen-dependent coproporphyrinogen-III oxidase (302 aa).

Position 94 (S94) interacts with substrate. The a divalent metal cation site is built by H98 and H108. The active-site Proton donor is H108. Substrate is bound at residue 110 to 112 (NVR). 2 residues coordinate a divalent metal cation: H147 and H177. The segment at 242–277 (YVEFNLVFDRGTLFGLQSGGRAESILMSMPPVANWR) is important for dimerization. 260 to 262 (GGR) is a substrate binding site.

Belongs to the aerobic coproporphyrinogen-III oxidase family. In terms of assembly, homodimer. A divalent metal cation serves as cofactor.

Its subcellular location is the cytoplasm. The enzyme catalyses coproporphyrinogen III + O2 + 2 H(+) = protoporphyrinogen IX + 2 CO2 + 2 H2O. It functions in the pathway porphyrin-containing compound metabolism; protoporphyrin-IX biosynthesis; protoporphyrinogen-IX from coproporphyrinogen-III (O2 route): step 1/1. Functionally, involved in the heme biosynthesis. Catalyzes the aerobic oxidative decarboxylation of propionate groups of rings A and B of coproporphyrinogen-III to yield the vinyl groups in protoporphyrinogen-IX. The sequence is that of Oxygen-dependent coproporphyrinogen-III oxidase from Ralstonia pickettii (strain 12J).